The chain runs to 216 residues: GTP cyclohydrolase 1 2 (216 aa).

It belongs to the GTP cyclohydrolase I family. Homomer.

The catalysed reaction is GTP + H2O = 7,8-dihydroneopterin 3'-triphosphate + formate + H(+). It functions in the pathway cofactor biosynthesis; 7,8-dihydroneopterin triphosphate biosynthesis; 7,8-dihydroneopterin triphosphate from GTP: step 1/1. The polypeptide is GTP cyclohydrolase 1 2 (folE2) (Nostoc sp. (strain PCC 7120 / SAG 25.82 / UTEX 2576)).